Consider the following 495-residue polypeptide: Transcription termination/antitermination protein NusA (495 aa).

One can recognise an S1 motif domain in the interval 135-200 (GKIVTGTVKK…KTAQLFVTRS (66 aa)). In terms of domain architecture, KH spans 302–374 (NHSMDIAVEA…LDEEFAQILV (73 aa)).

The protein belongs to the NusA family. Monomer. Binds directly to the core enzyme of the DNA-dependent RNA polymerase and to nascent RNA.

It is found in the cytoplasm. Functionally, participates in both transcription termination and antitermination. The protein is Transcription termination/antitermination protein NusA of Haemophilus influenzae (strain ATCC 51907 / DSM 11121 / KW20 / Rd).